The following is a 389-amino-acid chain: Chalcone synthase H2 (389 aa).

The active site involves cysteine 164.

It belongs to the thiolase-like superfamily. Chalcone/stilbene synthases family.

It localises to the cytoplasm. The catalysed reaction is (E)-4-coumaroyl-CoA + 3 malonyl-CoA + 3 H(+) = 2',4,4',6'-tetrahydroxychalcone + 3 CO2 + 4 CoA. It functions in the pathway secondary metabolite biosynthesis; flavonoid biosynthesis. Its function is as follows. Involved in the biosynthesis of prenylated phenolics natural products which contribute to the bitter taste of beer and display broad biological activities. Chalcone synthase that can use 4-coumaroyl-CoA to produce 4,2',4',6'-tetrahydroxychalcone (also termed naringenin-chalcone or chalcone) which can, under specific conditions, spontaneously isomerize into naringenin. This is Chalcone synthase H2 from Humulus lupulus (European hop).